A 442-amino-acid chain; its full sequence is Xaa-Pro dipeptidase (442 aa).

The Mn(2+) site is built by D245, D256, H338, E383, and E422.

This sequence belongs to the peptidase M24B family. Bacterial-type prolidase subfamily. Requires Mn(2+) as cofactor.

It carries out the reaction Xaa-L-Pro dipeptide + H2O = an L-alpha-amino acid + L-proline. Functionally, splits dipeptides with a prolyl residue in the C-terminal position. This chain is Xaa-Pro dipeptidase, found in Sodalis glossinidius (strain morsitans).